The sequence spans 364 residues: Spermatogenesis-associated protein 22 (364 aa).

Polar residues-rich tracts occupy residues 1–13 (MKRN…TRST), 30–48 (QPLT…NASD), 73–108 (KTVN…SKSD), 137–169 (LMTN…LPNQ), and 177–189 (QTKS…STMR). Disordered regions lie at residues 1–51 (MKRN…DNYD) and 70–189 (PLTK…STMR).

Component of a multiprotein complex with MEIOB and RPA2. Interacts with MEIOB. Interacts with the complex BRME1:HSF2BP:BRCA2.

The protein localises to the chromosome. Functionally, meiosis-specific protein required for homologous recombination in meiosis I. This is Spermatogenesis-associated protein 22 (SPATA22) from Bos taurus (Bovine).